The primary structure comprises 380 residues: MDINTDKYKNITRNLEREMINLNPIQRGGIIPTEAKKIIYEYWDGYSVCDYCSGRLDQIETPPINEFLEDMSKFLGMDITRPTHGARESKYAVMNSICKEGDYVVLDGNAHYTSYVALERAKLNYEKTEIEEYPTFRVIPESYAEKIDLLEDSKKNIGLILLTHVDGNYGNVADVEKVGKIAKSKGYPFLLNCAYSAGRMPIDGKKLNVDFIAASGHKSMAASGPCGLLSINKKYEDEVLETSKVNVVKELQMLGCTSRGIPILSLMASFEHLIERVKKWDLEVEKTRKVVNELEPLGFNQIGEKPRNHDIIRFETPILDKIAEKDKRRGFFFYEELKKRGIGGIRRGVTKEFKMSVYGLTNVQVDYVINSMKSIINELR.

Pyridoxal 5'-phosphate-binding positions include 86–87, asparagine 192, and 215–217; these read AR and SGH. Position 218 is an N6-(pyridoxal phosphate)lysine (lysine 218).

Belongs to the SepCysS family. As to quaternary structure, homodimer. Interacts with SepRS. The cofactor is pyridoxal 5'-phosphate.

It carries out the reaction O-phospho-L-seryl-tRNA(Cys) + hydrogen sulfide + H(+) = L-cysteinyl-tRNA(Cys) + phosphate. Its function is as follows. Converts O-phospho-L-seryl-tRNA(Cys) (Sep-tRNA(Cys)) to L-cysteinyl-tRNA(Cys) (Cys-tRNA(Cys)). The chain is O-phospho-L-seryl-tRNA:Cys-tRNA synthase from Methanococcus maripaludis (strain C7 / ATCC BAA-1331).